The chain runs to 176 residues: ATP-dependent protease subunit HslV (176 aa).

Threonine 5 is an active-site residue. Na(+) contacts are provided by alanine 161, cysteine 164, and threonine 167.

It belongs to the peptidase T1B family. HslV subfamily. As to quaternary structure, a double ring-shaped homohexamer of HslV is capped on each side by a ring-shaped HslU homohexamer. The assembly of the HslU/HslV complex is dependent on binding of ATP.

Its subcellular location is the cytoplasm. It carries out the reaction ATP-dependent cleavage of peptide bonds with broad specificity.. With respect to regulation, allosterically activated by HslU binding. Functionally, protease subunit of a proteasome-like degradation complex believed to be a general protein degrading machinery. This is ATP-dependent protease subunit HslV from Desulforamulus reducens (strain ATCC BAA-1160 / DSM 100696 / MI-1) (Desulfotomaculum reducens).